The sequence spans 177 residues: Large ribosomal subunit protein uL6 (177 aa).

The protein belongs to the universal ribosomal protein uL6 family. In terms of assembly, part of the 50S ribosomal subunit.

Its function is as follows. This protein binds to the 23S rRNA, and is important in its secondary structure. It is located near the subunit interface in the base of the L7/L12 stalk, and near the tRNA binding site of the peptidyltransferase center. This is Large ribosomal subunit protein uL6 from Rhizobium etli (strain CIAT 652).